Reading from the N-terminus, the 340-residue chain is Ketol-acid reductoisomerase (NADP(+)) (340 aa).

The region spanning 1–183 (MAITVYYDKD…GGGRTGIIET (183 aa)) is the KARI N-terminal Rossmann domain. NADP(+) is bound by residues 26–29 (FGSQ), Ser54, and 84–87 (DEFQ). Residue His109 is part of the active site. Gly135 contributes to the NADP(+) binding site. Residues 184–329 (TFKAETETDL…EKLRGMMPWI (146 aa)) enclose the KARI C-terminal knotted domain. Positions 192, 196, 228, and 232 each coordinate Mg(2+). Ser253 lines the substrate pocket.

The protein belongs to the ketol-acid reductoisomerase family. Requires Mg(2+) as cofactor.

It carries out the reaction (2R)-2,3-dihydroxy-3-methylbutanoate + NADP(+) = (2S)-2-acetolactate + NADPH + H(+). The enzyme catalyses (2R,3R)-2,3-dihydroxy-3-methylpentanoate + NADP(+) = (S)-2-ethyl-2-hydroxy-3-oxobutanoate + NADPH + H(+). Its pathway is amino-acid biosynthesis; L-isoleucine biosynthesis; L-isoleucine from 2-oxobutanoate: step 2/4. The protein operates within amino-acid biosynthesis; L-valine biosynthesis; L-valine from pyruvate: step 2/4. In terms of biological role, involved in the biosynthesis of branched-chain amino acids (BCAA). Catalyzes an alkyl-migration followed by a ketol-acid reduction of (S)-2-acetolactate (S2AL) to yield (R)-2,3-dihydroxy-isovalerate. In the isomerase reaction, S2AL is rearranged via a Mg-dependent methyl migration to produce 3-hydroxy-3-methyl-2-ketobutyrate (HMKB). In the reductase reaction, this 2-ketoacid undergoes a metal-dependent reduction by NADPH to yield (R)-2,3-dihydroxy-isovalerate. This chain is Ketol-acid reductoisomerase (NADP(+)), found in Campylobacter fetus subsp. fetus (strain 82-40).